The following is a 461-amino-acid chain: Ribosomal protein uS12 methylthiotransferase RimO (461 aa).

The region spanning 13-128 (PKVGFVSLGC…VMQHVHTHLP (116 aa)) is the MTTase N-terminal domain. Residues Cys-22, Cys-58, Cys-87, Cys-159, Cys-163, and Cys-166 each coordinate [4Fe-4S] cluster. Residues 145-390 (LTPRHYAYLK…MEVAEEVSAK (246 aa)) form the Radical SAM core domain. Positions 393-461 (AKKVGKTLKV…ADGHDLWGEV (69 aa)) constitute a TRAM domain.

The protein belongs to the methylthiotransferase family. RimO subfamily. It depends on [4Fe-4S] cluster as a cofactor.

Its subcellular location is the cytoplasm. It catalyses the reaction L-aspartate(89)-[ribosomal protein uS12]-hydrogen + (sulfur carrier)-SH + AH2 + 2 S-adenosyl-L-methionine = 3-methylsulfanyl-L-aspartate(89)-[ribosomal protein uS12]-hydrogen + (sulfur carrier)-H + 5'-deoxyadenosine + L-methionine + A + S-adenosyl-L-homocysteine + 2 H(+). Catalyzes the methylthiolation of an aspartic acid residue of ribosomal protein uS12. The chain is Ribosomal protein uS12 methylthiotransferase RimO from Paraburkholderia phytofirmans (strain DSM 17436 / LMG 22146 / PsJN) (Burkholderia phytofirmans).